A 208-amino-acid polypeptide reads, in one-letter code: Probable GTP-binding protein EngB (208 aa).

One can recognise an EngB-type G domain in the interval 23-205 (LTSEMVILGR…RQTLLKYLLT (183 aa)). Residues 31 to 38 (GRSNVGKS), 57 to 61 (GKTRL), 84 to 87 (DLPG), 154 to 157 (TKFD), and 182 to 184 (FNA) each bind GTP. Mg(2+)-binding residues include Ser38 and Thr59.

This sequence belongs to the TRAFAC class TrmE-Era-EngA-EngB-Septin-like GTPase superfamily. EngB GTPase family. The cofactor is Mg(2+).

Its function is as follows. Necessary for normal cell division and for the maintenance of normal septation. This chain is Probable GTP-binding protein EngB, found in Helicobacter pylori (strain P12).